A 658-amino-acid polypeptide reads, in one-letter code: Glycogen debranching enzyme (658 aa).

Asp-336 (nucleophile) is an active-site residue. Residue Glu-371 is the Proton donor of the active site. Positions 459–486 (EANGEENRDGTNSNYSDNNGKEGLGGPL) are disordered.

It belongs to the glycosyl hydrolase 13 family.

The enzyme catalyses Hydrolysis of (1-&gt;6)-alpha-D-glucosidic linkages to branches with degrees of polymerization of three or four glucose residues in limit dextrin.. It functions in the pathway glycan degradation; glycogen degradation. Functionally, removes maltotriose and maltotetraose chains that are attached by 1,6-alpha-linkage to the limit dextrin main chain, generating a debranched limit dextrin. This chain is Glycogen debranching enzyme, found in Salmonella gallinarum (strain 287/91 / NCTC 13346).